Consider the following 267-residue polypeptide: tRNA pseudouridine synthase A (267 aa).

Asp53 serves as the catalytic Nucleophile. Substrate is bound at residue Tyr114.

The protein belongs to the tRNA pseudouridine synthase TruA family. As to quaternary structure, homodimer.

The catalysed reaction is uridine(38/39/40) in tRNA = pseudouridine(38/39/40) in tRNA. Functionally, formation of pseudouridine at positions 38, 39 and 40 in the anticodon stem and loop of transfer RNAs. This Chlamydia trachomatis serovar L2b (strain UCH-1/proctitis) protein is tRNA pseudouridine synthase A.